Here is a 156-residue protein sequence, read N- to C-terminus: Small ribosomal subunit protein uS7 (156 aa).

The protein belongs to the universal ribosomal protein uS7 family. As to quaternary structure, part of the 30S ribosomal subunit. Contacts proteins S9 and S11.

One of the primary rRNA binding proteins, it binds directly to 16S rRNA where it nucleates assembly of the head domain of the 30S subunit. Is located at the subunit interface close to the decoding center, probably blocks exit of the E-site tRNA. This chain is Small ribosomal subunit protein uS7, found in Exiguobacterium sibiricum (strain DSM 17290 / CCUG 55495 / CIP 109462 / JCM 13490 / 255-15).